Here is a 990-residue protein sequence, read N- to C-terminus: Serine/threonine-protein phosphatase 6 regulatory ankyrin repeat subunit B (990 aa).

ANK repeat units follow at residues 7–36, 40–69, 73–102, 106–135, 139–168, 172–201, 205–234, 238–267, 271–301, 305–334, 338–367, 371–400, 404–433, 437–466, 470–499, 531–560, 566–595, 599–628, 633–662, 666–695, 699–728, 732–761, 768–797, 800–829, 835–864, 868–898, 902–931, and 938–967; these read ADQP…DVNA, EKRT…RVNA, MWLT…DVNA, NWQT…SVNV, GGRT…NINA, KDRR…EVTC, KGYT…EIDE, YGNT…NVNQ, NGFT…DVNI, DGKS…EIDC, DGNT…DTAK, HNMF…EIDT, FGRT…DFNK, RGRT…NINE, WGRT…NAEE, EGYN…NMFE, ATKS…DLDI, KGRT…SVTV, TKRT…NPDV, KGQT…SVDA, LGCT…SILC, RGRT…SEED, QGYT…FRKF, NSFS…ASIV, KGRT…QVNA, AGKT…DLTL, DSNT…EQSL, and SLQT…CVLA.

In terms of assembly, protein phosphatase 6 (PP6) holoenzyme is proposed to be a heterotrimeric complex formed by the catalytic subunit, a SAPS domain-containing subunit (PP6R) and an ankyrin repeat-domain containing regulatory subunit (ARS).

Its function is as follows. Putative regulatory subunit of protein phosphatase 6 (PP6) that may be involved in the recognition of phosphoprotein substrates. The protein is Serine/threonine-protein phosphatase 6 regulatory ankyrin repeat subunit B (ANKRD44) of Gallus gallus (Chicken).